Reading from the N-terminus, the 222-residue chain is Coiled-coil domain-containing protein 70 (222 aa).

Coiled-coil stretches lie at residues 34–62 (LQEE…WNFR) and 129–188 (NALW…KAAW).

The polypeptide is Coiled-coil domain-containing protein 70 (CCDC70) (Bos taurus (Bovine)).